Consider the following 779-residue polypeptide: Phosphoribosylformylglycinamidine synthase subunit PurL (779 aa).

H52 is a catalytic residue. Residues Y55 and K94 each coordinate ATP. E96 provides a ligand contact to Mg(2+). Residues 97 to 100 and R119 each bind substrate; that span reads SHNH. H98 acts as the Proton acceptor in catalysis. Position 120 (D120) interacts with Mg(2+). Q243 serves as a coordination point for substrate. Residue D271 participates in Mg(2+) binding. Position 315–317 (315–317) interacts with substrate; that stretch reads ESQ. N523 and G560 together coordinate ATP. N561 serves as a coordination point for Mg(2+). S563 contacts substrate.

The protein belongs to the FGAMS family. Monomer. Part of the FGAM synthase complex composed of 1 PurL, 1 PurQ and 2 PurS subunits.

It localises to the cytoplasm. It catalyses the reaction N(2)-formyl-N(1)-(5-phospho-beta-D-ribosyl)glycinamide + L-glutamine + ATP + H2O = 2-formamido-N(1)-(5-O-phospho-beta-D-ribosyl)acetamidine + L-glutamate + ADP + phosphate + H(+). Its pathway is purine metabolism; IMP biosynthesis via de novo pathway; 5-amino-1-(5-phospho-D-ribosyl)imidazole from N(2)-formyl-N(1)-(5-phospho-D-ribosyl)glycinamide: step 1/2. Its function is as follows. Part of the phosphoribosylformylglycinamidine synthase complex involved in the purines biosynthetic pathway. Catalyzes the ATP-dependent conversion of formylglycinamide ribonucleotide (FGAR) and glutamine to yield formylglycinamidine ribonucleotide (FGAM) and glutamate. The FGAM synthase complex is composed of three subunits. PurQ produces an ammonia molecule by converting glutamine to glutamate. PurL transfers the ammonia molecule to FGAR to form FGAM in an ATP-dependent manner. PurS interacts with PurQ and PurL and is thought to assist in the transfer of the ammonia molecule from PurQ to PurL. The chain is Phosphoribosylformylglycinamidine synthase subunit PurL from Prochlorococcus marinus (strain MIT 9301).